We begin with the raw amino-acid sequence, 230 residues long: Phosphatidylserine decarboxylase proenzyme (230 aa).

Residue serine 186 is the Schiff-base intermediate with substrate; via pyruvic acid of the active site. The residue at position 186 (serine 186) is a Pyruvic acid (Ser); by autocatalysis.

This sequence belongs to the phosphatidylserine decarboxylase family. PSD-A subfamily. In terms of assembly, heterodimer of a large membrane-associated beta subunit and a small pyruvoyl-containing alpha subunit. Requires pyruvate as cofactor. Post-translationally, is synthesized initially as an inactive proenzyme. Formation of the active enzyme involves a self-maturation process in which the active site pyruvoyl group is generated from an internal serine residue via an autocatalytic post-translational modification. Two non-identical subunits are generated from the proenzyme in this reaction, and the pyruvate is formed at the N-terminus of the alpha chain, which is derived from the carboxyl end of the proenzyme. The post-translation cleavage follows an unusual pathway, termed non-hydrolytic serinolysis, in which the side chain hydroxyl group of the serine supplies its oxygen atom to form the C-terminus of the beta chain, while the remainder of the serine residue undergoes an oxidative deamination to produce ammonia and the pyruvoyl prosthetic group on the alpha chain.

Its subcellular location is the cell membrane. It catalyses the reaction a 1,2-diacyl-sn-glycero-3-phospho-L-serine + H(+) = a 1,2-diacyl-sn-glycero-3-phosphoethanolamine + CO2. The protein operates within phospholipid metabolism; phosphatidylethanolamine biosynthesis; phosphatidylethanolamine from CDP-diacylglycerol: step 2/2. Its function is as follows. Catalyzes the formation of phosphatidylethanolamine (PtdEtn) from phosphatidylserine (PtdSer). The protein is Phosphatidylserine decarboxylase proenzyme of Wolbachia sp. subsp. Brugia malayi (strain TRS).